The following is a 1905-amino-acid chain: von Willebrand factor A domain-containing protein 8 (1905 aa).

Residues 1–45 (MQSRLLLLGAPGGLGDVASRRVRLLLRQVLRGRPGGDQQRLEVRL) constitute a mitochondrion transit peptide. Positions 1-260 (MQSRLLLLGA…PLDPPLRSRF (260 aa)) are interaction with PEX7. 446–453 (GGKGCGKT) contributes to the ATP binding site. Positions 1541-1560 (ERDSNEDVSDPKHGKEDPDN) are enriched in basic and acidic residues. Residues 1541-1583 (ERDSNEDVSDPKHGKEDPDNMPHVGGNTWAGGTGGRDTAGLGG) are disordered. Positions 1568–1583 (TWAGGTGGRDTAGLGG) are enriched in gly residues. The 183-residue stretch at 1714–1896 (RLRLVVDVSG…KKIPQILQQI (183 aa)) folds into the VWFA domain.

As to quaternary structure, monomer. Interacts with PEX7. Interacts with PEX5 in a PEX7-dependent manner. In terms of tissue distribution, isoform 1 is predominantly expressed in liver, kidney, pancreas, heart, and skeletal muscle (at protein level).

It is found in the mitochondrion. Its function is as follows. Exhibits ATPase activity in vitro. The sequence is that of von Willebrand factor A domain-containing protein 8 (Vwa8) from Mus musculus (Mouse).